The following is a 394-amino-acid chain: S-adenosylmethionine synthase (394 aa).

Histidine 16 provides a ligand contact to ATP. Aspartate 18 serves as a coordination point for Mg(2+). Glutamate 44 serves as a coordination point for K(+). Positions 57 and 100 each coordinate L-methionine. A flexible loop region spans residues 100–110 (QSPDIAQGVDA). ATP-binding positions include 172 to 174 (DAK), 239 to 240 (RF), aspartate 248, 254 to 255 (RK), alanine 271, and lysine 275. Residue aspartate 248 coordinates L-methionine. An L-methionine-binding site is contributed by lysine 279.

Belongs to the AdoMet synthase family. In terms of assembly, homotetramer; dimer of dimers. Requires Mg(2+) as cofactor. The cofactor is K(+).

It is found in the cytoplasm. It carries out the reaction L-methionine + ATP + H2O = S-adenosyl-L-methionine + phosphate + diphosphate. It participates in amino-acid biosynthesis; S-adenosyl-L-methionine biosynthesis; S-adenosyl-L-methionine from L-methionine: step 1/1. In terms of biological role, catalyzes the formation of S-adenosylmethionine (AdoMet) from methionine and ATP. The overall synthetic reaction is composed of two sequential steps, AdoMet formation and the subsequent tripolyphosphate hydrolysis which occurs prior to release of AdoMet from the enzyme. The polypeptide is S-adenosylmethionine synthase (Enterococcus faecalis (strain ATCC 700802 / V583)).